Reading from the N-terminus, the 339-residue chain is MTEYTPKERLYRALRKQPVDRMPAVCFTQTGTVEQMEASGAFWPEAHADAEKMAKLAEAGHTVIGFEAVRVPFDITAEAELFGCGIKAGDLKQQPSVIKHSVKNLEDLDKIKNYSLDTGRIGTILKAVKILSEKYGKELPVIGSMIGPFSLAQHINGDAWFGNLFTGEDIVPALLDFCADFNIAYAKAMVENGADTIAIIDPTASYELIGGEFYEKYALPYQKKIVDAMKELDVATVLHICGNTTNGLAIMDRTGVNAISVDQRVDIKTATGNVENAIIVGNLDPVAVLWNGTPEDVEAASKKVLDAGVGILTVGCGIVSMTPSANLQKMVECAKNYRY.

Residues histidine 239, cysteine 241, and cysteine 316 each contribute to the Zn(2+) site.

This sequence belongs to the uroporphyrinogen decarboxylase family. MtbA/MtaA subfamily. Requires Zn(2+) as cofactor.

The catalysed reaction is methyl-Co(III)-[methylamine-specific corrinoid protein] + coenzyme M = Co(I)-[methylamine-specific corrinoid protein] + methyl-coenzyme M + H(+). Its pathway is one-carbon metabolism; methanogenesis from methylated amine. Methyltransferase involved in methanogenesis from methylamines methanol pathway. Catalyzes the transfer of the methyl group from the methylated corrinoid protein MtmC (MtmC1 or MtmC2) to coenzyme M, forming the substrate for coenzyme-B sulfoethylthiotransferase. This chain is Methylcobamide:CoM methyltransferase MtbA (mtbA), found in Methanosarcina mazei (strain ATCC BAA-159 / DSM 3647 / Goe1 / Go1 / JCM 11833 / OCM 88) (Methanosarcina frisia).